The chain runs to 131 residues: M-zodatoxin-Lt8m (131 aa).

Residues 1–20 (MKYFVVALALVAAFACIAES) form the signal peptide. A propeptide spanning residues 21-60 (KPAESEHELAEVEEENELADLEDAVWLEHLADLSDLEEAR) is cleaved from the precursor.

The protein belongs to the cationic peptide 06 (cytoinsectotoxin) family. Expressed by the venom gland.

It localises to the secreted. Functionally, insecticidal, cytolytic and antimicrobial peptide. Forms voltage-dependent, ion-permeable channels in membranes. At high concentration causes cell membrane lysis. The sequence is that of M-zodatoxin-Lt8m (cit 1-13) from Lachesana tarabaevi (Spider).